Consider the following 233-residue polypeptide: Glucosamine-6-phosphate deaminase (233 aa).

The active-site Proton acceptor; for enolization step is the Asp-62. The active-site For ring-opening step is the Asn-128. His-130 functions as the Proton acceptor; for ring-opening step in the catalytic mechanism. Glu-135 (for ring-opening step) is an active-site residue.

It belongs to the glucosamine/galactosamine-6-phosphate isomerase family. NagB subfamily.

It catalyses the reaction alpha-D-glucosamine 6-phosphate + H2O = beta-D-fructose 6-phosphate + NH4(+). Its pathway is amino-sugar metabolism; N-acetylneuraminate degradation; D-fructose 6-phosphate from N-acetylneuraminate: step 5/5. In terms of biological role, catalyzes the reversible isomerization-deamination of glucosamine 6-phosphate (GlcN6P) to form fructose 6-phosphate (Fru6P) and ammonium ion. In Enterococcus faecalis (strain ATCC 700802 / V583), this protein is Glucosamine-6-phosphate deaminase.